The following is a 312-amino-acid chain: Non-structural protein 12A (312 aa).

Residues M1–G23 are compositionally biased toward low complexity. 3 disordered regions span residues M1–V37, F62–D99, and E111–D161. A compositionally biased stretch (basic and acidic residues) spans V63–S77. Residues S78–A98 show a composition bias toward polar residues. Positions D122–Q134 are enriched in basic and acidic residues.

Belongs to the phytoreovirus non-structural protein Pns12A family.

The protein localises to the host cytoplasm. In terms of biological role, constituent of viral factories. Binds to ssRNA and dsRNA. This chain is Non-structural protein 12A, found in Alopecurus aequalis (Barnyard grass).